The following is an 826-amino-acid chain: MSASRFMLRPLTRALLMHGATRTRLAGTGLGLALTLTAAPYVQAQEWTLNIPSQPLAQALQTLGQQTSLQIIYSPESLQGLRSTALNGRYQDDESLKAMLNGTGIRYQRDGNTVTVLGPATGSAMELAPTNVNASRLGATTEGSNSYTTGGVTIGKGVHSLKETPQSVTVMTRKMLDDQNLNTIEQVMEKTPGITVYDSPMGGKYFYSRGFRMSGQYQYDGVPLDIGSSYVQADSFNSDMAIYDRVEVLRGAAGMMKGAGGTAGGVNFVRKRGQDTAHTQLSLSAGTWDNYRGQVDTGGPLNDSGTIRGRAVVTEQTRQYFYDVGSRKDQIYYGALDFDLSPDTTLGLGFAWEDVDATPCWGGLPRYADGSDLHLKRSTCLNTAWNNQRSKRATYFADLKHQFNDDWSLKVAGVYSRNTQDMEYAFPSGAVPVGATATNTLMLGSIYDYDQRDYGFDAYVDGKFDAFGQQHELTIGANASRSHKDDFYAVAALPQRQNVLDPNHHIPQPDESYYLANASRGGPVDMHIKQYGAYSIARLKLADPLTLVLGSRVSWYKSDTDSVQYFRGEGTQVDTKSTETGQVTPFAGVLFDLNDNLTAYASYTDIFTPQGAYKTIDGSTLKPLVGQSYELGIKGEWFDGRLNSTFNLFRTLQKDAAQDDPRCEDSSCSINSGKVRAQGFEAEVSGEVIDRLQLLAGYTYTQTKVLEDADATQDGVVYNSYVPRHLLRVWGDYSLSGPLDRVTIGAGVNAQTGNYRTSPIGGDNIDGAGYAVWNGRIGYRIDDTWSVALNGNNLFDKRYYSTIGTEGFGNFYGDPRNFVMSVKADF.

The N-terminal stretch at 1 to 44 (MSASRFMLRPLTRALLMHGATRTRLAGTGLGLALTLTAAPYVQA) is a signal peptide. A TonB box motif is present at residues 110-119 (DGNTVTVLGP). The 112-residue stretch at 160-271 (SLKETPQSVT…TAGGVNFVRK (112 aa)) folds into the TBDR plug domain. The region spanning 276-826 (TAHTQLSLSA…NFVMSVKADF (551 aa)) is the TBDR beta-barrel domain. Residues 809–826 (GNFYGDPRNFVMSVKADF) carry the TonB C-terminal box motif.

The protein belongs to the TonB-dependent receptor family.

It is found in the cell outer membrane. In terms of biological role, specific receptor for the siderophore ferric pyoverdine (pseudobactin) M114. The sequence is that of Ferric-pyoverdine M114 receptor PbuA (pbuA) from Pseudomonas sp. (strain M114).